Consider the following 253-residue polypeptide: Nurim homolog (253 aa).

The Nuclear portion of the chain corresponds to 1–2 (MT). A helical membrane pass occupies residues 3-30 (SIAKSIVLLASLATFAYSLYVVGSLMMF). Over 31–56 (LSTPRSISKAHTWIFNLLDNKSRLQT) the chain is Perinuclear space. A helical membrane pass occupies residues 57–78 (AYGPVVFDTLYLIGFIFQHSFL). Over 79–96 (KSAVVKKLLAKLGLSGAE) the chain is Nuclear. A helical transmembrane segment spans residues 97-113 (RTIYSLTSSLCLHYLIV). Topologically, residues 114-132 (NWLPAQSIVLWQIDVEQSA) are perinuclear space. Residues 133–161 (PLWWTFVITHGICWVVIFGGSLVMDLPEL) traverse the membrane as a helical segment. Over 162–188 (LGVKQAYYDLKAYGPPISYKSGELRNL) the chain is Nuclear. The helical transmembrane segment at 189-207 (YAHVRHPSFVGLSVILFAT) threads the bilayer. At 208–213 (NVMSVD) the chain is on the perinuclear space side. Residues 214–231 (RLVMALLLTTYMYLAWST) form a helical membrane-spanning segment. The Nuclear portion of the chain corresponds to 232–253 (DQKDVAYQKIQLQRKKLELKAK).

It belongs to the nurim family.

It localises to the nucleus inner membrane. This Drosophila melanogaster (Fruit fly) protein is Nurim homolog (nrm).